Here is a 467-residue protein sequence, read N- to C-terminus: Proton extrusion protein PxcA (467 aa).

Polar residues predominate over residues 146–161 (SQVRTTSSQPPENPSL). Disordered regions lie at residues 146–167 (SQVR…ALRT) and 186–205 (PQLI…KADT). A compositionally biased stretch (basic and acidic residues) spans 191–203 (QRTEQSKKSRGKA). 4 helical membrane passes run 249–269 (FILL…ALIV), 352–372 (IFSV…IMVL), 391–411 (IIIL…WEVI), and 427–447 (FIFL…KYWI).

It belongs to the CemA family.

It is found in the cell inner membrane. Required for H(+) efflux immediately after light irradiation to form a rapid H(+) concentration gradient across the thylakoid membranes. Together with PxcL, contributes to transient H(+) uptake following dark to light transition. The protein is Proton extrusion protein PxcA of Nostoc sp. (strain PCC 7120 / SAG 25.82 / UTEX 2576).